The primary structure comprises 371 residues: Putative glutamate--cysteine ligase 2 (371 aa).

This sequence belongs to the glutamate--cysteine ligase type 2 family. YbdK subfamily.

The enzyme catalyses L-cysteine + L-glutamate + ATP = gamma-L-glutamyl-L-cysteine + ADP + phosphate + H(+). Its function is as follows. ATP-dependent carboxylate-amine ligase which exhibits weak glutamate--cysteine ligase activity. The protein is Putative glutamate--cysteine ligase 2 of Burkholderia ambifaria (strain MC40-6).